Here is a 228-residue protein sequence, read N- to C-terminus: Caspase recruitment domain-containing protein 19 (228 aa).

An intrachain disulfide couples Cys-7 to Cys-77. The CARD domain maps to 8-99 (DRLVQDTPFL…PLHSRLPSRH (92 aa)). Val-113 carries the post-translational modification Phosphoserine.

In terms of assembly, associates with BCL10 by CARD-CARD interaction. As to expression, expressed in ovary, testis, placenta, skeletal muscle, kidney, lung, heart and liver (at protein level). Expressed in thymus and brain.

Its subcellular location is the nucleus. It is found in the endoplasmic reticulum membrane. The protein localises to the mitochondrion membrane. In terms of biological role, plays a role in inhibiting the effects of BCL10-induced activation of NF-kappa-B. May inhibit the phosphorylation of BCL10 in a CARD-dependent manner. In Homo sapiens (Human), this protein is Caspase recruitment domain-containing protein 19 (CARD19).